The chain runs to 638 residues: UvrABC system protein C (638 aa).

One can recognise a GIY-YIG domain in the interval 20-97; that stretch reads ECAGVYQMFD…IKKFQPKFNI (78 aa). A UVR domain is found at 209–244; sequence KELQENLSKKMEELSSHMYFEEAAEIRDRIKALSYV.

The protein belongs to the UvrC family. Interacts with UvrB in an incision complex.

The protein resides in the cytoplasm. Its function is as follows. The UvrABC repair system catalyzes the recognition and processing of DNA lesions. UvrC both incises the 5' and 3' sides of the lesion. The N-terminal half is responsible for the 3' incision and the C-terminal half is responsible for the 5' incision. This Rickettsia canadensis (strain McKiel) protein is UvrABC system protein C.